The following is a 323-amino-acid chain: Sphingolipid delta(4)-desaturase/C4-monooxygenase DES2 (323 aa).

Residue glycine 2 is the site of N-myristoyl glycine attachment. Helical transmembrane passes span 41–61 (PNIKWTVLGMVLVQVLACWLV) and 68–88 (WLLFWAYAFGGCINHSLTLAI). The Histidine box-1 signature appears at 89–93 (HDISH). The interval 95–99 (TAFGT) is required for C4-hydroxylase activity. A Histidine box-2 motif is present at residues 128–132 (HVDHH). A helical membrane pass occupies residues 200–220 (IFALWGIKAIVYLLASSLLGL). Residues 259–263 (HVEHH) carry the Histidine box-3 motif.

The protein belongs to the fatty acid desaturase type 1 family. DEGS subfamily.

The protein localises to the endoplasmic reticulum membrane. The enzyme catalyses a dihydroceramide + 2 Fe(II)-[cytochrome b5] + O2 + 2 H(+) = a phytoceramide + 2 Fe(III)-[cytochrome b5] + H2O. It catalyses the reaction an N-acylsphinganine + 2 Fe(II)-[cytochrome b5] + O2 + 2 H(+) = an N-acylsphing-4-enine + 2 Fe(III)-[cytochrome b5] + 2 H2O. It carries out the reaction N-octanoylsphinganine + 2 Fe(II)-[cytochrome b5] + O2 + 2 H(+) = N-octanoyl-4-hydroxysphinganine + 2 Fe(III)-[cytochrome b5] + H2O. The catalysed reaction is an N-acylsphinganine + 2 Fe(II)-[cytochrome b5] + O2 + 2 H(+) = an N-acyl-(4R)-4-hydroxysphinganine + 2 Fe(III)-[cytochrome b5] + H2O. The protein operates within membrane lipid metabolism; sphingolipid biosynthesis. Functionally, bifunctional enzyme which acts both as a sphingolipid delta(4)-desaturase and a sphingolipid C4-monooxygenase. This chain is Sphingolipid delta(4)-desaturase/C4-monooxygenase DES2, found in Rattus norvegicus (Rat).